The chain runs to 309 residues: Prepilin leader peptidase/N-methyltransferase (309 aa).

A helical membrane pass occupies residues 35–55 (MQLAFAIVLGLVVGSFINVVV). C96, C99, C121, and C124 together coordinate Zn(2+). Transmembrane regions (helical) follow at residues 147 to 167 (LALFGPSGAALAAFGLCAALL), 183 to 203 (LTLPLLWAGLCVNLWGTFASL), 207 to 227 (VIGAIAGYLFLWCILWLFKLL), 230 to 250 (IEGIGYGDLKLLAALGAWLGW), 253 to 273 (LPQVVLIAAVAGAAVGLVATW), and 288 to 308 (FLAAGGAATLFFGTPFYLLLG).

It belongs to the peptidase A24 family. Zn(2+) serves as cofactor.

The protein localises to the cell inner membrane. It carries out the reaction Typically cleaves a -Gly-|-Phe- bond to release an N-terminal, basic peptide of 5-8 residues from type IV prepilin, and then N-methylates the new N-terminal amino group, the methyl donor being S-adenosyl-L-methionine.. Plays an essential role in type IV pili and type II pseudopili formation by proteolytically removing the leader sequence from substrate proteins and subsequently monomethylating the alpha-amino group of the newly exposed N-terminal phenylalanine. The chain is Prepilin leader peptidase/N-methyltransferase (gspO) from Burkholderia pseudomallei (strain K96243).